The chain runs to 454 residues: Anthocyanidin 3-O-galactosyltransferase 3GT6 (454 aa).

The signal sequence occupies residues 1-21; it reads MTNSSKGRHVAVLPFPFSTHA. S18 and H20 together coordinate an anthocyanidin. The active-site Proton acceptor is the H20. The active-site Charge relay is D117. H148 contacts an anthocyanidin. UDP-alpha-D-glucose-binding residues include A331, Q333, H348, W351, N352, S353, and E356. Residue G371 participates in an anthocyanidin binding. Position 372 (D372) interacts with UDP-alpha-D-glucose. N-linked (GlcNAc...) asparagine glycosylation occurs at N441.

This sequence belongs to the UDP-glycosyltransferase family. As to quaternary structure, monomer. Mostly expressed in leaves and flowers and, to a lower extent, in roots. In flowers, mainly observed in petals, stamens and scapes, and at lower levels in pistils and toruses.

It carries out the reaction cyanidin + UDP-alpha-D-galactose = cyanidin 3-O-beta-D-galactoside + UDP + H(+). The catalysed reaction is cyanidin + UDP-alpha-D-glucose = cyanidin 3-O-beta-D-glucoside + UDP + H(+). It catalyses the reaction delphinidin + UDP-alpha-D-glucose = delphinidin 3-O-beta-D-glucoside + UDP. The enzyme catalyses peonidin + UDP-alpha-D-glucose = peonidin 3-O-beta-D-glucoside + UDP. It carries out the reaction pelargonidin + UDP-alpha-D-glucose = pelargonidin 3-O-beta-D-glucoside + UDP. The catalysed reaction is delphinidin + UDP-alpha-D-galactose = delphinidin 3-O-beta-D-galactoside + UDP + H(+). It catalyses the reaction pelargonidin + UDP-alpha-D-galactose = pelargonidin 3-O-beta-D-galactoside betaine + UDP. The enzyme catalyses peonidin + UDP-alpha-D-galactose = peonidin 3-O-beta-D-galactoside + UDP. It carries out the reaction petunidin + UDP-alpha-D-galactose = petunidin 3-O-beta-D-galactoside + UDP. The catalysed reaction is petunidin + UDP-alpha-D-glucose = petunidin 3-O-beta-D-glucoside + UDP. It catalyses the reaction an anthocyanidin + UDP-alpha-D-glucose + H(+) = an anthocyanidin 3-O-beta-D-glucoside + UDP. The enzyme catalyses an anthocyanidin + UDP-alpha-D-galactose = an anthocyanidin 3-O-beta-D-galactoside + UDP. It functions in the pathway pigment biosynthesis; anthocyanin biosynthesis. Its function is as follows. Flavonoid 3-O-glycosyltransferase involved in the biosynthesis of anthocyanins conferring flower red/pink colors, mainly anthocyanidin 3-O-glycosides. Catalyzes the addition of UDP-sugar to the 3-OH of anthocyanidin, with a preference for UDP-galactose (UDP-Gal) as sugar donor and cyanidin as substrate; able to use delphinidin, pelargonidin, peonidin and petunidin as substrates in the presence of UDP-Gal, but barely active on malvidin. Can also use UDP-glucose (UDP-Glu) as sugar donor with cyanidin, delphinidin, pelargonidin, peonidin and petunidin as substrates, but not active on malvidin. The chain is Anthocyanidin 3-O-galactosyltransferase 3GT6 from Rhododendron delavayi (Rhododendron).